An 838-amino-acid chain; its full sequence is Multiphosphoryl transfer protein (838 aa).

Positions 7–147 (APVTPDLVRL…AVIVAALTGD (141 aa)) constitute a PTS EIIA type-2 domain. Histidine 67 acts as the Tele-phosphohistidine intermediate; for EIIA activity in catalysis. Histidine 67 is subject to Phosphohistidine; by HPr. In terms of domain architecture, HPr spans 161-253 (AERFEWTIAY…LTAQEKADAE (93 aa)). Catalysis depends on histidine 175, which acts as the Pros-phosphohistidine intermediate; for HPr activity. A Phosphohistidine; by EI modification is found at histidine 175. The PTS EI stretch occupies residues 274-838 (AIVGIGASPG…ALEAQREGQA (565 aa)). Histidine 460 (tele-phosphohistidine intermediate; for PTS EI activity) is an active-site residue. A Phosphohistidine; by autocatalysis modification is found at histidine 460. 2 residues coordinate phosphoenolpyruvate: arginine 567 and arginine 603. Residues glutamate 697 and aspartate 721 each contribute to the Mg(2+) site. Phosphoenolpyruvate is bound by residues 720–721 (ND) and arginine 731. Cysteine 768 serves as the catalytic Proton donor.

This sequence belongs to the PEP-utilizing enzyme family. Mg(2+) serves as cofactor.

The protein localises to the cytoplasm. It catalyses the reaction L-histidyl-[protein] + phosphoenolpyruvate = N(pros)-phospho-L-histidyl-[protein] + pyruvate. In terms of biological role, the phosphoenolpyruvate-dependent sugar phosphotransferase system (sugar PTS), a major carbohydrate active transport system, catalyzes the phosphorylation of incoming sugar substrates concomitantly with their translocation across the cell membrane. The enzyme II FruAB PTS system is involved in fructose transport. This Xanthomonas campestris pv. campestris (strain ATCC 33913 / DSM 3586 / NCPPB 528 / LMG 568 / P 25) protein is Multiphosphoryl transfer protein.